The following is a 211-amino-acid chain: Ras-related protein RABB1c (211 aa).

Serine 2 bears the N-acetylserine mark. Residue 13-21 (GDTGVGKSC) coordinates GTP. An Effector region motif is present at residues 35–43 (HDLTIGVEF). GTP is bound by residues 61–65 (DTAGQ), 119–122 (NKCD), and 149–151 (SAK). 2 S-geranylgeranyl cysteine lipidation sites follow: cysteine 209 and cysteine 210.

The protein belongs to the small GTPase superfamily. Rab family.

It localises to the cell membrane. Intracellular vesicle trafficking and protein transport. The polypeptide is Ras-related protein RABB1c (RABB1C) (Arabidopsis thaliana (Mouse-ear cress)).